Here is a 180-residue protein sequence, read N- to C-terminus: MILVQLAAEEAQNPLIPEVPELVIGLLAFAIVFFVLGKKLLPNINKVLEERRAAIEGGIEEAEAMKVEAQSVLEQYKAQLAEARHEAARLRQEAQEQGATLITEMRAEGQRQREEIIAAGHAQLEADRKAAAQALRQDVGTLATDLAGKLVGESLEDHARQSRVIDRFLDGLEEKAEATR.

The helical transmembrane segment at 15–35 threads the bilayer; the sequence is LIPEVPELVIGLLAFAIVFFV.

The protein belongs to the ATPase B chain family. As to quaternary structure, F-type ATPases have 2 components, F(1) - the catalytic core - and F(0) - the membrane proton channel. F(1) has five subunits: alpha(3), beta(3), gamma(1), delta(1), epsilon(1). F(0) has three main subunits: a(1), b(2) and c(10-14). The alpha and beta chains form an alternating ring which encloses part of the gamma chain. F(1) is attached to F(0) by a central stalk formed by the gamma and epsilon chains, while a peripheral stalk is formed by the delta and b chains.

The protein resides in the cell membrane. In terms of biological role, f(1)F(0) ATP synthase produces ATP from ADP in the presence of a proton or sodium gradient. F-type ATPases consist of two structural domains, F(1) containing the extramembraneous catalytic core and F(0) containing the membrane proton channel, linked together by a central stalk and a peripheral stalk. During catalysis, ATP synthesis in the catalytic domain of F(1) is coupled via a rotary mechanism of the central stalk subunits to proton translocation. Component of the F(0) channel, it forms part of the peripheral stalk, linking F(1) to F(0). The protein is ATP synthase subunit b of Streptomyces avermitilis (strain ATCC 31267 / DSM 46492 / JCM 5070 / NBRC 14893 / NCIMB 12804 / NRRL 8165 / MA-4680).